The primary structure comprises 1505 residues: Homeobox protein cut-like 1 (1505 aa).

The stretch at 56-407 (LLKSFQGEID…ALRISNSDLS (352 aa)) forms a coiled coil. 2 stretches are compositionally biased toward polar residues: residues 396-407 (NAALRISNSDLS) and 440-451 (EQASNTNGTHQF). Disordered stretches follow at residues 396-455 (NAAL…SPAG), 512-552 (YSTN…EEMD), 646-669 (PKRR…GSDE), and 682-704 (LQVQ…NSDD). The span at 516–546 (SISSQSPLQQSPDVNGMAPSPSQSESAGSVS) shows a compositional bias: low complexity. Glu540 bears the Phosphoserine mark. The CUT 1 DNA-binding region spans 542-629 (AGSVSEGEEM…ILALRSIQGR (88 aa)). Low complexity predominate over residues 694 to 703 (SSASGSGNSD). Phosphoserine is present on Ser763. The disordered stretch occupies residues 768–802 (SAAPEAGASALPNPPALKKEAQDAPGLDPQGAADC). Residues Lys785, Lys811, and Lys842 each participate in a glycyl lysine isopeptide (Lys-Gly) (interchain with G-Cter in SUMO2) cross-link. Residues 815–853 (GRSGAWKDHWWSAVQPERRNAASSEEAKAEETGGGKEKG) show a composition bias toward basic and acidic residues. The segment at 815 to 930 (GRSGAWKDHW…KPTKPSVPPL (116 aa)) is disordered. Composition is skewed to polar residues over residues 868 to 877 (SQLQGPSSSE) and 887 to 911 (SPYS…NSPL). Residue Ser909 is modified to Phosphoserine. A DNA-binding region (CUT 2) is located at residues 934 to 1021 (QYEVYMYQEV…QGVLPVQGQQ (88 aa)). A compositionally biased stretch (polar residues) spans 1036–1049 (LQQGCVSSESTPKT). Residues 1036–1110 (LQQGCVSSES…QPTTPLPLSG (75 aa)) form a disordered region. A compositionally biased stretch (low complexity) spans 1050–1066 (SASCSPAPESPMSSSES). Residues Ser1059 and Ser1069 each carry the phosphoserine modification. The CUT 3 DNA-binding region spans 1117 to 1204 (QELVAMSPEL…VEKLMDMKRM (88 aa)). A disordered region spans residues 1210-1247 (MKRRHSSVSDSQPCEPPSVGTEYSQGASPQPQHQLKKP). Positions 1230–1242 (TEYSQGASPQPQH) are enriched in polar residues. Positions 1244–1303 (LKKPRVVLAPEEKEALKRAYQQKPYPSPKTIEDLATQLNLKTSTVINWFHNYRSRIRREL) form a DNA-binding region, homeobox. Position 1270 is a phosphoserine (Ser1270). A Glycyl lysine isopeptide (Lys-Gly) (interchain with G-Cter in SUMO2) cross-link involves residue Lys1284. The tract at residues 1312 to 1480 (SQGQAGASDS…SRDNPLRKKK (169 aa)) is disordered. A compositionally biased stretch (low complexity) spans 1316-1333 (AGASDSPSARSGRAAPSS). Residue Ser1337 is modified to Phosphoserine. Basic and acidic residues-rich tracts occupy residues 1353–1368 (EEPK…EVPR) and 1384–1394 (DDARDDDHEGG). 2 stretches are compositionally biased toward low complexity: residues 1405–1436 (PASA…AAPS) and 1443–1455 (NSSS…RPSS). Phosphoserine is present on Ser1455. Over residues 1467-1476 (GARDSRDNPL) the composition is skewed to basic and acidic residues. A phosphoserine mark is found at Ser1486 and Ser1496.

It belongs to the CUT homeobox family. Interacts with BANP. Interacts with SATB1 (via DNA-binding domains); the interaction inhibits the attachment of both proteins to DNA. In terms of processing, phosphorylated by PKA. As cells progress into S phase, a fraction of CUX1 molecules is proteolytically processed into N-terminally truncated proteins of 110 kDa by CTSL. Cell cycle-dependent processing of CUX1 serves to generate a CDP/Cux p110 with distinct DNA binding and transcriptional properties.

It is found in the nucleus. Its function is as follows. Transcription factor involved in the control of neuronal differentiation in the brain. Regulates dendrite development and branching, and dendritic spine formation in cortical layers II-III. Also involved in the control of synaptogenesis. In addition, it has probably a broad role in mammalian development as a repressor of developmentally regulated gene expression. May act by preventing binding of positively-activing CCAAT factors to promoters. Component of nf-munr repressor; binds to the matrix attachment regions (MARs) (5' and 3') of the immunoglobulin heavy chain enhancer. Represses T-cell receptor (TCR) beta enhancer function by binding to MARbeta, an ATC-rich DNA sequence located upstream of the TCR beta enhancer. Binds to the TH enhancer; may require the basic helix-loop-helix protein TCF4 as a coactivator. Plays a role in cell cycle progression, in particular at the G1/S transition. As cells progress into S phase, a fraction of CUX1 molecules is proteolytically processed into N-terminally truncated proteins of 110 kDa. While CUX1 only transiently binds to DNA and carries the CCAAT-displacement activity, CDP/Cux p110 makes a stable interaction with DNA and stimulates expression of genes such as POLA1. The protein is Homeobox protein cut-like 1 of Homo sapiens (Human).